Here is a 185-residue protein sequence, read N- to C-terminus: dTTP/UTP pyrophosphatase (185 aa).

The active-site Proton acceptor is the Asp64.

This sequence belongs to the Maf family. YhdE subfamily. Requires a divalent metal cation as cofactor.

The protein localises to the cytoplasm. The catalysed reaction is dTTP + H2O = dTMP + diphosphate + H(+). It carries out the reaction UTP + H2O = UMP + diphosphate + H(+). Functionally, nucleoside triphosphate pyrophosphatase that hydrolyzes dTTP and UTP. May have a dual role in cell division arrest and in preventing the incorporation of modified nucleotides into cellular nucleic acids. This chain is dTTP/UTP pyrophosphatase, found in Thermococcus gammatolerans (strain DSM 15229 / JCM 11827 / EJ3).